Consider the following 498-residue polypeptide: Lysine--tRNA ligase (498 aa).

The Mg(2+) site is built by Glu408 and Glu415.

The protein belongs to the class-II aminoacyl-tRNA synthetase family. Homodimer. Mg(2+) is required as a cofactor.

The protein resides in the cytoplasm. The catalysed reaction is tRNA(Lys) + L-lysine + ATP = L-lysyl-tRNA(Lys) + AMP + diphosphate. The sequence is that of Lysine--tRNA ligase from Pediococcus pentosaceus (strain ATCC 25745 / CCUG 21536 / LMG 10740 / 183-1w).